We begin with the raw amino-acid sequence, 508 residues long: Protein DETOXIFICATION 52 (508 aa).

Transmembrane regions (helical) follow at residues 48-68 (ILAA…LGHI), 78-98 (LAIA…ALGM), 122-142 (VLFL…LGKI), 156-176 (AQTY…LHPL), 189-209 (LTLA…FLVS), 222-242 (AAAS…IAGL), 270-290 (IGVC…GLLI), 300-320 (GILI…GLAV), 341-361 (IVAV…AWGV), 368-388 (IFTN…ILGL), 415-437 (INLG…WAAY), and 441-463 (GLWV…VVAT).

The protein belongs to the multi antimicrobial extrusion (MATE) (TC 2.A.66.1) family. As to expression, detected in the part of the veins in cotyledons of 6-day-old seedlings and the basal parts of the petioles in older plants. Highly expressed in the vascular tissues of hypocotyl in dark-grown seedlings.

It localises to the late endosome membrane. May act as a negative regulator of hypocotyl cell elongation in the light. The sequence is that of Protein DETOXIFICATION 52 from Arabidopsis thaliana (Mouse-ear cress).